We begin with the raw amino-acid sequence, 626 residues long: Hormonally up-regulated neu tumor-associated kinase homolog B (626 aa).

ATP is bound by residues 1–2 (KV) and K17. The Protein kinase domain maps to 1-246 (KVREGLHVGT…IQQALANRWL (246 aa)). The active-site Proton acceptor is D112. A compositionally biased stretch (basic and acidic residues) spans 336-357 (KYKMNKNSYEERRSKDLEKRGE). Disordered stretches follow at residues 336–407 (KYKM…ESFG), 477–574 (VNRE…RSRG), and 590–615 (QVVSPKGEKPLETRMPPLHQMSPGYA). Positions 374-390 (SHRQSTCLTPQGHSSSK) are enriched in polar residues. Basic and acidic residues predominate over residues 392 to 405 (PIKERRSSKSERES). A compositionally biased stretch (polar residues) spans 518–532 (DNTSPLKGHSNQASF). Residues 539 to 555 (SPSSPESMSPTSPHSPS) show a composition bias toward low complexity. The segment covering 556–566 (CNNNISGNLGS) has biased composition (polar residues).

It belongs to the protein kinase superfamily. CAMK Ser/Thr protein kinase family. SNF1 subfamily. In terms of tissue distribution, in the egg, expressed predominantly in the animal hemisphere. This pattern of expression persists throughout the cleavage and blastula stages. At the gastrula stage, expression is restricted to the ectoderm. In later-stage embryos, expressed over the entire embryonic surface including the open neural plate at stage 15 and the neural tube at stage 22. In tadpoles, strongly expressed in the neural tube, motor neurons, brain regions and sensory organs (otic vesicle and eye). Also expressed in the perisomitic mesoderm, brachial arches and embryonic epidermis of tadpoles.

It catalyses the reaction L-seryl-[protein] + ATP = O-phospho-L-seryl-[protein] + ADP + H(+). It carries out the reaction L-threonyl-[protein] + ATP = O-phospho-L-threonyl-[protein] + ADP + H(+). In Xenopus laevis (African clawed frog), this protein is Hormonally up-regulated neu tumor-associated kinase homolog B (hunk-b).